The sequence spans 684 residues: Probable potassium transport system protein Kup (684 aa).

The next 12 helical transmembrane spans lie at 19-39 (ALLV…LYVM), 61-81 (VSLI…LIAL), 104-124 (WLVL…MLTP), 151-171 (QVIW…RFGT), 177-197 (AFGP…FIAL), 223-243 (MGLF…ALYS), 255-275 (LSWP…AVWL), 303-323 (LGAI…LISG), 352-372 (LYIP…IGYF), 381-401 (AYGL…YQYL), 407-427 (PAVI…VFFI), and 433-453 (FLHG…VMYV).

Belongs to the HAK/KUP transporter (TC 2.A.72) family.

It localises to the cell membrane. The catalysed reaction is K(+)(in) + H(+)(in) = K(+)(out) + H(+)(out). In terms of biological role, transport of potassium into the cell. Likely operates as a K(+):H(+) symporter. The protein is Probable potassium transport system protein Kup of Lacticaseibacillus casei (strain BL23) (Lactobacillus casei).